The chain runs to 151 residues: UPAR/Ly6 domain-containing protein rtv (151 aa).

The N-terminal stretch at 1–19 is a signal peptide; that stretch reads MQFTSLLLAVIFLISLVSI. The Extracellular portion of the chain corresponds to 20–125; the sequence is DGLLRRCYQC…QGDLCNGARS (106 aa). Intrachain disulfides connect cysteine 26–cysteine 65, cysteine 29–cysteine 38, cysteine 60–cysteine 88, cysteine 100–cysteine 113, and cysteine 115–cysteine 120. Residue asparagine 45 is glycosylated (N-linked (GlcNAc...) asparagine). A lipid anchor (GPI-anchor amidated asparagine) is attached at asparagine 121. Positions 122–151 are cleaved as a propeptide — removed in mature form; that stretch reads GARSWSSAPQMILITMLPLLGSWLLQRMRN. A helical transmembrane segment spans residues 126 to 146; that stretch reads WSSAPQMILITMLPLLGSWLL. Over 147 to 151 the chain is Cytoplasmic; sequence QRMRN.

Belongs to the quiver family.

It is found in the cell membrane. Functionally, required for chitin fiber assembly and organization involved in cuticle formation and tracheal development. The sequence is that of UPAR/Ly6 domain-containing protein rtv from Drosophila melanogaster (Fruit fly).